Reading from the N-terminus, the 63-residue chain is Large ribosomal subunit protein uL30 (63 aa).

The protein belongs to the universal ribosomal protein uL30 family. As to quaternary structure, part of the 50S ribosomal subunit.

The sequence is that of Large ribosomal subunit protein uL30 from Rickettsia akari (strain Hartford).